The primary structure comprises 340 residues: S-adenosylmethionine:tRNA ribosyltransferase-isomerase (340 aa).

It belongs to the QueA family. In terms of assembly, monomer.

It localises to the cytoplasm. It carries out the reaction 7-aminomethyl-7-carbaguanosine(34) in tRNA + S-adenosyl-L-methionine = epoxyqueuosine(34) in tRNA + adenine + L-methionine + 2 H(+). It functions in the pathway tRNA modification; tRNA-queuosine biosynthesis. Its function is as follows. Transfers and isomerizes the ribose moiety from AdoMet to the 7-aminomethyl group of 7-deazaguanine (preQ1-tRNA) to give epoxyqueuosine (oQ-tRNA). This is S-adenosylmethionine:tRNA ribosyltransferase-isomerase from Aliarcobacter butzleri (strain RM4018) (Arcobacter butzleri).